We begin with the raw amino-acid sequence, 329 residues long: Capsular polysaccharide phosphotransferase WcwK (329 aa).

Belongs to the stealth family.

This chain is Capsular polysaccharide phosphotransferase WcwK (wcwK), found in Streptococcus pneumoniae.